The sequence spans 384 residues: Chorismate synthase (384 aa).

The NADP(+) site is built by arginine 39 and arginine 45. FMN-binding positions include 130–132, 248–249, glycine 292, 307–311, and arginine 333; these read RSS, NA, and KPIPT.

Belongs to the chorismate synthase family. Homotetramer. The cofactor is FMNH2.

The enzyme catalyses 5-O-(1-carboxyvinyl)-3-phosphoshikimate = chorismate + phosphate. It participates in metabolic intermediate biosynthesis; chorismate biosynthesis; chorismate from D-erythrose 4-phosphate and phosphoenolpyruvate: step 7/7. Catalyzes the anti-1,4-elimination of the C-3 phosphate and the C-6 proR hydrogen from 5-enolpyruvylshikimate-3-phosphate (EPSP) to yield chorismate, which is the branch point compound that serves as the starting substrate for the three terminal pathways of aromatic amino acid biosynthesis. This reaction introduces a second double bond into the aromatic ring system. This Exiguobacterium sibiricum (strain DSM 17290 / CCUG 55495 / CIP 109462 / JCM 13490 / 255-15) protein is Chorismate synthase.